The sequence spans 234 residues: 2,3,4,5-tetrahydropyridine-2,6-dicarboxylate N-acetyltransferase (234 aa).

It belongs to the transferase hexapeptide repeat family. DapH subfamily.

It catalyses the reaction (S)-2,3,4,5-tetrahydrodipicolinate + acetyl-CoA + H2O = L-2-acetamido-6-oxoheptanedioate + CoA. It functions in the pathway amino-acid biosynthesis; L-lysine biosynthesis via DAP pathway; LL-2,6-diaminopimelate from (S)-tetrahydrodipicolinate (acetylase route): step 1/3. In terms of biological role, catalyzes the transfer of an acetyl group from acetyl-CoA to tetrahydrodipicolinate. This is 2,3,4,5-tetrahydropyridine-2,6-dicarboxylate N-acetyltransferase from Lacticaseibacillus paracasei (strain ATCC 334 / BCRC 17002 / CCUG 31169 / CIP 107868 / KCTC 3260 / NRRL B-441) (Lactobacillus paracasei).